Here is a 439-residue protein sequence, read N- to C-terminus: GTPase Obg (439 aa).

The 160-residue stretch at 5 to 164 (TDFFDQATIV…LTLELELKML (160 aa)) folds into the Obg domain. Residues 165-335 (ADVGLVGFPN…LLQRVAELLR (171 aa)) form the OBG-type G domain. GTP is bound by residues 171 to 178 (GFPNAGKS), 196 to 200 (FTTLT), 217 to 220 (DIPG), 287 to 290 (NKAD), and 316 to 318 (SAA). Ser-178 and Thr-198 together coordinate Mg(2+). A disordered region spans residues 337–359 (DPPPQRDPVDPDEPPLEWPLPPV). An OCT domain is found at 356-433 (LPPVDENAFT…IGRAELVWDD (78 aa)).

This sequence belongs to the TRAFAC class OBG-HflX-like GTPase superfamily. OBG GTPase family. Monomer. Requires Mg(2+) as cofactor.

It localises to the cytoplasm. In terms of biological role, an essential GTPase which binds GTP, GDP and possibly (p)ppGpp with moderate affinity, with high nucleotide exchange rates and a fairly low GTP hydrolysis rate. Plays a role in control of the cell cycle, stress response, ribosome biogenesis and in those bacteria that undergo differentiation, in morphogenesis control. The polypeptide is GTPase Obg (Chloroflexus aggregans (strain MD-66 / DSM 9485)).